We begin with the raw amino-acid sequence, 1241 residues long: MTNPSDRVLPANSMAESREGDFGCTVMELRKLMELRSRDALTQINVHYGGVQNLCSRLKTSPVEGLSGNPADLEKRRQVFGHNVIPPKKPKTFLELVWEALQDVTLIILEIAAIISLVLSFYRPAGEENELCGQVATTPEDENEAQAGWIEGAAILFSVIIVVLVTAFNDWSKEKQFRGLQCRIEQEQKFSIIRNGQLIQLPVAEIVVGDIAQVKYGDLLPADGILIQGNDLKIDESSLTGESDHVKKSLDKDPMLLSGTHVMEGSGRMVVTAVGVNSQTGIILTLLGVNEDDEGEKKKKGKKQGVPENRNKAKTQDGVALEIQPLNSQEGIDNEEKDKKAVKVPKKEKSVLQGKLTRLAVQIGKAGLLMSALTVFILILYFVIDNFVINRRPWLPECTPIYIQYFVKFFIIGITVLVVAVPEGLPLAVTISLAYSVKKMMKDNNLVRHLDACETMGNATAICSDKTGTLTMNRMTVVQAYIGGIHYRQIPSPDVFLPKVLDLIVNGISINSAYTSKILPPEKEGGLPRQVGNKTECALLGFVTDLKQDYQAVRNEVPEEKLYKVYTFNSVRKSMSTVIRNPNGGFRMYSKGASEIILRKCNRILDRKGEAVPFKNKDRDDMVRTVIEPMACDGLRTICIAYRDFDDTEPSWDNENEILTELTCIAVVGIEDPVRPEVPDAIAKCKQAGITVRMVTGDNINTARAIATKCGILTPGDDFLCLEGKEFNRLIRNEKGEVEQEKLDKIWPKLRVLARSSPTDKHTLVKGIIDSTVGEHRQVVAVTGDGTNDGPALKKADVGFAMGIAGTDVAKEASDIILTDDNFTSIVKAVMWGRNVYDSISKFLQFQLTVNVVAVIVAFTGACITQDSPLKAVQMLWVNLIMDTFASLALATEPPTESLLKRRPYGRNKPLISRTMMKNILGHAFYQLIVIFILVFAGEKFFDIDSGRKAPLHSPPSQHYTIVFNTFVLMQLFNEINSRKIHGEKNVFSGIYRNIIFCSVVLGTFICQIFIVEFGGKPFSCTSLSLSQWLWCLFIGIGELLWGQFISAIPTRSLKFLKEAGHGTTKEEITKDAEGLDEIDHAEMELRRGQILWFRGLNRIQTQIDVINTFQTGASFKGVLRRQNMGQHLDVKLVPSSSYIKVVKAFHSSLHESIQKPYNQKSIHSFMTHPEFAIEEELPRTPLLDEEEEENPDKASKFGTRVLLLDGEVTPYANTNNNAVDCNQVQLPQSDSSLQSLETSV.

The Cytoplasmic segment spans residues 1-92; it reads MTNPSDRVLP…NVIPPKKPKT (92 aa). Serine 13 carries the post-translational modification Phosphoserine. Residues 93–113 form a helical membrane-spanning segment; that stretch reads FLELVWEALQDVTLIILEIAA. Residues 114–150 lie on the Extracellular side of the membrane; that stretch reads IISLVLSFYRPAGEENELCGQVATTPEDENEAQAGWI. Residues 151–171 form a helical membrane-spanning segment; sequence EGAAILFSVIIVVLVTAFNDW. Topologically, residues 172-356 are cytoplasmic; that stretch reads SKEKQFRGLQ…KEKSVLQGKL (185 aa). Positions 294–318 are disordered; sequence EGEKKKKGKKQGVPENRNKAKTQDG. Serine 328 carries the phosphoserine modification. The chain crosses the membrane as a helical span at residues 357 to 376; sequence TRLAVQIGKAGLLMSALTVF. Residues 377 to 409 are Extracellular-facing; that stretch reads ILILYFVIDNFVINRRPWLPECTPIYIQYFVKF. The chain crosses the membrane as a helical span at residues 410–427; that stretch reads FIIGITVLVVAVPEGLPL. Residues 428–840 lie on the Cytoplasmic side of the membrane; that stretch reads AVTISLAYSV…MWGRNVYDSI (413 aa). Catalysis depends on aspartate 465, which acts as the 4-aspartylphosphate intermediate. Positions 785 and 789 each coordinate Mg(2+). The helical transmembrane segment at 841–860 threads the bilayer; it reads SKFLQFQLTVNVVAVIVAFT. Residues 861–870 lie on the Extracellular side of the membrane; the sequence is GACITQDSPL. The chain crosses the membrane as a helical span at residues 871 to 891; the sequence is KAVQMLWVNLIMDTFASLALA. The Cytoplasmic segment spans residues 892 to 911; sequence TEPPTESLLKRRPYGRNKPL. The chain crosses the membrane as a helical span at residues 912 to 934; it reads ISRTMMKNILGHAFYQLIVIFIL. Residues 935 to 952 are Extracellular-facing; that stretch reads VFAGEKFFDIDSGRKAPL. The chain crosses the membrane as a helical span at residues 953 to 974; the sequence is HSPPSQHYTIVFNTFVLMQLFN. Residues 975-993 are Cytoplasmic-facing; it reads EINSRKIHGEKNVFSGIYR. A helical transmembrane segment spans residues 994–1015; the sequence is NIIFCSVVLGTFICQIFIVEFG. Residues 1016 to 1025 are Extracellular-facing; it reads GKPFSCTSLS. The chain crosses the membrane as a helical span at residues 1026 to 1047; the sequence is LSQWLWCLFIGIGELLWGQFIS. Topologically, residues 1048–1241 are cytoplasmic; that stretch reads AIPTRSLKFL…SSLQSLETSV (194 aa). The interval 1086 to 1103 is calmodulin-binding subdomain A; the sequence is LRRGQILWFRGLNRIQTQ. Threonine 1102 bears the Phosphothreonine; by PKC mark. Residues 1104–1113 are calmodulin-binding subdomain B; it reads IDVINTFQTG.

It belongs to the cation transport ATPase (P-type) (TC 3.A.3) family. Type IIB subfamily. As to quaternary structure, interacts with PDZD11. Interacts with SLC35G1 and STIM1. Interacts with calmodulin. In terms of tissue distribution, isoform XB is the most abundant isoform and is expressed ubiquitously. Isoforms containing segment Z have only been detected in heart, while isoforms containing segment a have been found in heart, stomach and brain cortex.

The protein localises to the cell membrane. The protein resides in the cell projection. It localises to the cilium. Its subcellular location is the flagellum membrane. It carries out the reaction Ca(2+)(in) + ATP + H2O = Ca(2+)(out) + ADP + phosphate + H(+). Activated by calcium/calmodulin. Its function is as follows. Calcium/calmodulin-regulated and magnesium-dependent enzyme that catalyzes the hydrolysis of ATP coupled with the transport of calcium out of the cell. By regulating sperm cell calcium homeostasis, may play a role in sperm motility. The chain is Plasma membrane calcium-transporting ATPase 4 from Homo sapiens (Human).